We begin with the raw amino-acid sequence, 95 residues long: Aspartyl/glutamyl-tRNA(Asn/Gln) amidotransferase subunit C (95 aa).

The protein belongs to the GatC family. As to quaternary structure, heterotrimer of A, B and C subunits.

It catalyses the reaction L-glutamyl-tRNA(Gln) + L-glutamine + ATP + H2O = L-glutaminyl-tRNA(Gln) + L-glutamate + ADP + phosphate + H(+). The catalysed reaction is L-aspartyl-tRNA(Asn) + L-glutamine + ATP + H2O = L-asparaginyl-tRNA(Asn) + L-glutamate + ADP + phosphate + 2 H(+). Allows the formation of correctly charged Asn-tRNA(Asn) or Gln-tRNA(Gln) through the transamidation of misacylated Asp-tRNA(Asn) or Glu-tRNA(Gln) in organisms which lack either or both of asparaginyl-tRNA or glutaminyl-tRNA synthetases. The reaction takes place in the presence of glutamine and ATP through an activated phospho-Asp-tRNA(Asn) or phospho-Glu-tRNA(Gln). The sequence is that of Aspartyl/glutamyl-tRNA(Asn/Gln) amidotransferase subunit C from Desulforapulum autotrophicum (strain ATCC 43914 / DSM 3382 / VKM B-1955 / HRM2) (Desulfobacterium autotrophicum).